We begin with the raw amino-acid sequence, 22 residues long: Motilin (22 aa).

The segment at 1-22 (FVPIFTHSELQKIREKERNKGQ) is disordered. The segment covering 9–22 (ELQKIREKERNKGQ) has biased composition (basic and acidic residues).

It belongs to the motilin family.

The protein resides in the secreted. Functionally, plays an important role in the regulation of interdigestive gastrointestinal motility and indirectly causes rhythmic contraction of duodenal and colonic smooth muscle. In Canis lupus familiaris (Dog), this protein is Motilin (MLN).